Here is an 84-residue protein sequence, read N- to C-terminus: Glutaredoxin (84 aa).

The 84-residue stretch at 1 to 84 (MPPVVIYTTA…AGKLDALLSA (84 aa)) folds into the Glutaredoxin domain. A disulfide bridge connects residues C12 and C15.

This sequence belongs to the glutaredoxin family. Monomer.

The protein localises to the cytoplasm. Functionally, has a glutathione-disulfide oxidoreductase activity in the presence of NADPH and glutathione reductase. Reduces low molecular weight disulfides and proteins. In Pseudomonas aeruginosa (strain ATCC 15692 / DSM 22644 / CIP 104116 / JCM 14847 / LMG 12228 / 1C / PRS 101 / PAO1), this protein is Glutaredoxin (grx).